The primary structure comprises 256 residues: Hydroxyethylthiazole kinase (256 aa).

M38 lines the substrate pocket. ATP is bound by residues R114 and T159. G186 is a substrate binding site.

This sequence belongs to the Thz kinase family. Mg(2+) is required as a cofactor.

It catalyses the reaction 5-(2-hydroxyethyl)-4-methylthiazole + ATP = 4-methyl-5-(2-phosphooxyethyl)-thiazole + ADP + H(+). The protein operates within cofactor biosynthesis; thiamine diphosphate biosynthesis; 4-methyl-5-(2-phosphoethyl)-thiazole from 5-(2-hydroxyethyl)-4-methylthiazole: step 1/1. Functionally, catalyzes the phosphorylation of the hydroxyl group of 4-methyl-5-beta-hydroxyethylthiazole (THZ). This Streptococcus agalactiae serotype Ia (strain ATCC 27591 / A909 / CDC SS700) protein is Hydroxyethylthiazole kinase.